Reading from the N-terminus, the 286-residue chain is Probable tRNA(His) guanylyltransferase (286 aa).

Residues Asp-29, Gly-30, and Asp-76 each coordinate Mg(2+). GTP is bound by residues Asp-29–His-34 and Ser-75–Asp-76.

It belongs to the tRNA(His) guanylyltransferase family. The cofactor is Mg(2+).

It catalyses the reaction a 5'-end ribonucleotide-tRNA(His) + GTP + ATP + H2O = a 5'-end phospho-guanosine-ribonucleotide-tRNA(His) + AMP + 2 diphosphate + H(+). Adds a GMP to the 5'-end of tRNA(His) after transcription and RNase P cleavage. In Drosophila melanogaster (Fruit fly), this protein is Probable tRNA(His) guanylyltransferase.